The following is a 144-amino-acid chain: Large ribosomal subunit protein uL14 (144 aa).

The protein belongs to the universal ribosomal protein uL14 family. Part of the 50S ribosomal subunit. Forms a cluster with proteins L3 and L24e, part of which may contact the 16S rRNA in 2 intersubunit bridges.

Functionally, binds to 23S rRNA. Forms part of two intersubunit bridges in the 70S ribosome. The protein is Large ribosomal subunit protein uL14 of Cenarchaeum symbiosum (strain A).